The chain runs to 164 residues: Succinate dehydrogenase assembly factor 3, mitochondrial (164 aa).

The N-terminal 51 residues, 1 to 51 (MRPTLLRLANASGPLPLSVSQASVQLIPPIPLYRRLLRAHRLLPVDMRYMG), are a transit peptide targeting the mitochondrion. Positions 136-145 (KSPEQIEREA) are enriched in basic and acidic residues. The interval 136-164 (KSPEQIEREANSAGVSPVNPNDPTTAGNS) is disordered. The segment covering 153 to 164 (VNPNDPTTAGNS) has biased composition (polar residues).

The protein belongs to the complex I LYR family. SDHAF3 subfamily. Interacts with the iron-sulfur protein subunit within the SDH catalytic dimer.

It localises to the mitochondrion matrix. Functionally, plays an essential role in the assembly of succinate dehydrogenase (SDH), an enzyme complex (also referred to as respiratory complex II) that is a component of both the tricarboxylic acid (TCA) cycle and the mitochondrial electron transport chain, and which couples the oxidation of succinate to fumarate with the reduction of ubiquinone (coenzyme Q) to ubiquinol. Promotes maturation of the iron-sulfur protein subunit of the SDH catalytic dimer, protecting it from the deleterious effects of oxidants. May act together with SDHAF1. In Cryptococcus neoformans var. neoformans serotype D (strain B-3501A) (Filobasidiella neoformans), this protein is Succinate dehydrogenase assembly factor 3, mitochondrial.